Reading from the N-terminus, the 335-residue chain is tRNA N6-adenosine threonylcarbamoyltransferase (335 aa).

3 residues coordinate Fe cation: His-111, His-115, and Tyr-132. Residues 132 to 136, Asp-164, Gly-177, Glu-181, and Asn-260 each bind substrate; that span reads YVSGG. Residue Asp-288 participates in Fe cation binding.

Belongs to the KAE1 / TsaD family. As to quaternary structure, monomer. Component of the KEOPS complex that consists of Kae1, Bud32, Cgi121 and Pcc1; the whole complex dimerizes. The cofactor is Fe(2+).

The protein resides in the cytoplasm. It catalyses the reaction L-threonylcarbamoyladenylate + adenosine(37) in tRNA = N(6)-L-threonylcarbamoyladenosine(37) in tRNA + AMP + H(+). Functionally, required for the formation of a threonylcarbamoyl group on adenosine at position 37 (t(6)A37) in tRNAs that read codons beginning with adenine. Is a component of the KEOPS complex that is probably involved in the transfer of the threonylcarbamoyl moiety of threonylcarbamoyl-AMP (TC-AMP) to the N6 group of A37. Kae1 likely plays a direct catalytic role in this reaction, but requires other protein(s) of the complex to fulfill this activity. The polypeptide is tRNA N6-adenosine threonylcarbamoyltransferase (Methanococcoides burtonii (strain DSM 6242 / NBRC 107633 / OCM 468 / ACE-M)).